A 79-amino-acid polypeptide reads, in one-letter code: MSSKIKFVALLIVVISLLLNNAQSTREILSAEICGWNDPAVHCKTKEDCFEKCGGRPAKKVFCVRPGDHSYDRLCCCRA.

The first 24 residues, 1-24, serve as a signal peptide directing secretion; it reads MSSKIKFVALLIVVISLLLNNAQS. Cystine bridges form between cysteine 34–cysteine 77, cysteine 43–cysteine 63, cysteine 49–cysteine 75, and cysteine 53–cysteine 76.

This sequence belongs to the DEFL family.

It localises to the secreted. This is Defensin-like protein 272 from Arabidopsis thaliana (Mouse-ear cress).